Reading from the N-terminus, the 285-residue chain is Protein HEXIM1 (285 aa).

Disordered stretches follow at residues 1–56 and 132–196; these read MSEV…QNPG and LMED…LQKD. The span at 23 to 36 shows a compositional bias: basic and acidic residues; it reads GGWHHPVEREEHPV. Positions 168–180 are enriched in acidic residues; that stretch reads TDDDLEEEEDEAG. Residues 213-284 adopt a coiled-coil conformation; the sequence is SKQDLIKEYL…QEGKQVAADS (72 aa).

The protein belongs to the HEXIM family. In terms of assembly, homooligomer and heterooligomer. Core component of the 7SK RNP complex.

It is found in the nucleus. The protein resides in the cytoplasm. Functionally, transcriptional regulator which functions as a general RNA polymerase II transcription inhibitor. Core component of the 7SK RNP complex: in cooperation with 7SK snRNA sequesters P-TEFb in a large inactive 7SK snRNP complex preventing RNA polymerase II phosphorylation and subsequent transcriptional elongation. Plays a role in the regulation of DNA virus-mediated innate immune response by assembling into the HDP-RNP complex, a complex that serves as a platform for IRF3 phosphorylation and subsequent innate immune response activation through the cGAS-STING pathway. This Xenopus laevis (African clawed frog) protein is Protein HEXIM1 (hexim1).